We begin with the raw amino-acid sequence, 943 residues long: Protein translocase subunit SecA (943 aa).

Residues glutamine 90, 108-112 (GEGKT), and aspartate 509 each bind ATP. The tract at residues 535–564 (PDNEHKPPIPKQRNSKSKGGFSKKASSKLK) is disordered.

It belongs to the SecA family. As to quaternary structure, monomer and homodimer. Part of the essential Sec protein translocation apparatus which comprises SecA, SecYEG and auxiliary proteins SecDF. Other proteins may also be involved.

Its subcellular location is the cell inner membrane. It is found in the cellular thylakoid membrane. The protein resides in the cytoplasm. It catalyses the reaction ATP + H2O + cellular proteinSide 1 = ADP + phosphate + cellular proteinSide 2.. Part of the Sec protein translocase complex. Interacts with the SecYEG preprotein conducting channel. Has a central role in coupling the hydrolysis of ATP to the transfer of proteins into and across the cell membrane, serving as an ATP-driven molecular motor driving the stepwise translocation of polypeptide chains across the membrane. In terms of biological role, probably participates in protein translocation into and across both the cytoplasmic and thylakoid membranes in cyanobacterial cells. The chain is Protein translocase subunit SecA from Prochlorococcus marinus (strain MIT 9215).